Here is a 117-residue protein sequence, read N- to C-terminus: uncharacterized protein (117 aa).

The segment at 1 to 20 (METKKLIGKPLQPARPVRHL) is disordered.

This is an uncharacterized protein from Homo sapiens (Human).